We begin with the raw amino-acid sequence, 471 residues long: Ribulose bisphosphate carboxylase large chain (471 aa).

Substrate contacts are provided by Asn-119 and Thr-169. The active-site Proton acceptor is Lys-171. Lys-173 lines the substrate pocket. 3 residues coordinate Mg(2+): Lys-197, Asp-199, and Glu-200. Residue Lys-197 is modified to N6-carboxylysine. The Proton acceptor role is filled by His-290. Substrate contacts are provided by Arg-291, His-323, and Ser-375.

This sequence belongs to the RuBisCO large chain family. Type I subfamily. As to quaternary structure, heterohexadecamer of 8 large chains and 8 small chains; disulfide-linked. The disulfide link is formed within the large subunit homodimers. The cofactor is Mg(2+). The disulfide bond which can form in the large chain dimeric partners within the hexadecamer appears to be associated with oxidative stress and protein turnover.

Its subcellular location is the carboxysome. The catalysed reaction is 2 (2R)-3-phosphoglycerate + 2 H(+) = D-ribulose 1,5-bisphosphate + CO2 + H2O. The enzyme catalyses D-ribulose 1,5-bisphosphate + O2 = 2-phosphoglycolate + (2R)-3-phosphoglycerate + 2 H(+). Its function is as follows. RuBisCO catalyzes two reactions: the carboxylation of D-ribulose 1,5-bisphosphate, the primary event in carbon dioxide fixation, as well as the oxidative fragmentation of the pentose substrate in the photorespiration process. Both reactions occur simultaneously and in competition at the same active site. The protein is Ribulose bisphosphate carboxylase large chain of Microcystis aeruginosa (strain NIES-843 / IAM M-2473).